A 292-amino-acid polypeptide reads, in one-letter code: Undecaprenyl-diphosphatase (292 aa).

7 consecutive transmembrane segments (helical) span residues 1 to 21 (MSLV…FLPV), 46 to 66 (FVTI…RADI), 88 to 108 (ARLG…GKLL), 114 to 134 (ALGN…LLAA), 192 to 212 (FLLS…STVP), 225 to 245 (VVGT…LLAW), and 253 to 273 (VFVV…LSGV).

It belongs to the UppP family.

Its subcellular location is the cell inner membrane. It catalyses the reaction di-trans,octa-cis-undecaprenyl diphosphate + H2O = di-trans,octa-cis-undecaprenyl phosphate + phosphate + H(+). Catalyzes the dephosphorylation of undecaprenyl diphosphate (UPP). Confers resistance to bacitracin. The protein is Undecaprenyl-diphosphatase of Anaeromyxobacter dehalogenans (strain 2CP-C).